We begin with the raw amino-acid sequence, 305 residues long: MLAWQDVGAKAAPSHHKISFSVLDILDPQKFTRAALPPVRLAALEAKKSLEEVEAGQDACSGNPIGSQETPDAVGRGIDPGSPVEGSEAEEEEEAEDAGRAHQPERWQGVHEGSPEARAVAVGTEESGAEGLPASPGSPGSPRPRRRRAESSCAKPRRARTAFTYEQLVALENKFRATRYLSVCERLNLALSLSLTETQVKIWFQNRRTKWKKQNPGADGAVQAGGGAPQPGTPGAVAGGGGSATGSSPGPPVPGALPYQTFPTYPATNVLFPAASFPLTTAANGSPFTPFLGPSYLTPFYAPHL.

2 disordered regions span residues 51-158 (EEVE…KPRR) and 210-257 (KWKK…PGAL). Over residues 87–96 (SEAEEEEEAE) the composition is skewed to acidic residues. Over residues 97–115 (DAGRAHQPERWQGVHEGSP) the composition is skewed to basic and acidic residues. A compositionally biased stretch (low complexity) spans 129–140 (AEGLPASPGSPG). Positions 156–215 (PRRARTAFTYEQLVALENKFRATRYLSVCERLNLALSLSLTETQVKIWFQNRRTKWKKQN) form a DNA-binding region, homeobox.

Belongs to the NK-1 homeobox family. As to quaternary structure, interacts (via the homeodomain) with HIPK1, HIPK2, and HIPK3. In terms of processing, phosphorylated by HIPK2 in vitro. In terms of tissue distribution, expression detected in the brain, testis and spleen. In the testis, expressed in the germ cells of the seminiferous epithelium, predominantly in elongating spermatids and spermatozoa. Expressed throughout the brain with highest levels in regions of the cerebral cortex, hippocampus, diencephalon, pons, medulla and cerebellum.

The protein resides in the nucleus. It is found in the nucleolus. Its function is as follows. Transcriptional repressor. May play a role in early development as a Wnt/beta-catenin effector, hence controlling pluripotency and preimplantation development of embryonic stem cells. May promote adipogenesis in mesenchymal stem cells, possibly by inhibiting the expression of the antiadipogenic factor NR2F2. May inhibit osteoblastogenic differentiation. The sequence is that of NK1 transcription factor-related protein 2 (Nkx1-2) from Mus musculus (Mouse).